The chain runs to 97 residues: MKRKTLLLIAALVALPGVTYADSPFSSLQSAHEKNTILKDLRKMCTPKGALTDEAWEKKIMASEGNQQHIREAMIAIERNNQHNYWQALGKVECPEM.

This is an uncharacterized protein from Salmonella choleraesuis (strain SC-B67).